Reading from the N-terminus, the 378-residue chain is tRNA-specific 2-thiouridylase MnmA (378 aa).

ATP-binding positions include 6–13 (AMSGGVDS) and leucine 32. The active-site Nucleophile is cysteine 101. Cysteine 101 and cysteine 199 are oxidised to a cystine. Glycine 125 contacts ATP. An interaction with tRNA region spans residues 148–150 (KDQ). Cysteine 199 serves as the catalytic Cysteine persulfide intermediate.

This sequence belongs to the MnmA/TRMU family.

Its subcellular location is the cytoplasm. The catalysed reaction is S-sulfanyl-L-cysteinyl-[protein] + uridine(34) in tRNA + AH2 + ATP = 2-thiouridine(34) in tRNA + L-cysteinyl-[protein] + A + AMP + diphosphate + H(+). Catalyzes the 2-thiolation of uridine at the wobble position (U34) of tRNA, leading to the formation of s(2)U34. The sequence is that of tRNA-specific 2-thiouridylase MnmA from Renibacterium salmoninarum (strain ATCC 33209 / DSM 20767 / JCM 11484 / NBRC 15589 / NCIMB 2235).